A 503-amino-acid chain; its full sequence is Probable cytosol aminopeptidase (503 aa).

The Mn(2+) site is built by lysine 270 and aspartate 275. Residue lysine 282 is part of the active site. Positions 293, 352, and 354 each coordinate Mn(2+). Arginine 356 is a catalytic residue.

It belongs to the peptidase M17 family. The cofactor is Mn(2+).

It localises to the cytoplasm. It catalyses the reaction Release of an N-terminal amino acid, Xaa-|-Yaa-, in which Xaa is preferably Leu, but may be other amino acids including Pro although not Arg or Lys, and Yaa may be Pro. Amino acid amides and methyl esters are also readily hydrolyzed, but rates on arylamides are exceedingly low.. The catalysed reaction is Release of an N-terminal amino acid, preferentially leucine, but not glutamic or aspartic acids.. Presumably involved in the processing and regular turnover of intracellular proteins. Catalyzes the removal of unsubstituted N-terminal amino acids from various peptides. This is Probable cytosol aminopeptidase from Salmonella agona (strain SL483).